Consider the following 394-residue polypeptide: Elongation factor Tu 1 (394 aa).

The region spanning 10 to 204 (KPHVNVGTIG…ALDSYIPEPQ (195 aa)) is the tr-type G domain. The G1 stretch occupies residues 19 to 26 (GHVDHGKT). 19–26 (GHVDHGKT) is a binding site for GTP. Residue Thr26 participates in Mg(2+) binding. The tract at residues 60–64 (GITIS) is G2. Residues 81–84 (DCPG) form a G3 region. Residues 81–85 (DCPGH) and 136–139 (NKCD) each bind GTP. Residues 136-139 (NKCD) form a G4 region. A G5 region spans residues 174–176 (SAL).

This sequence belongs to the TRAFAC class translation factor GTPase superfamily. Classic translation factor GTPase family. EF-Tu/EF-1A subfamily. As to quaternary structure, monomer.

It is found in the cytoplasm. The catalysed reaction is GTP + H2O = GDP + phosphate + H(+). Its function is as follows. GTP hydrolase that promotes the GTP-dependent binding of aminoacyl-tRNA to the A-site of ribosomes during protein biosynthesis. This Pseudoalteromonas translucida (strain TAC 125) protein is Elongation factor Tu 1.